A 427-amino-acid chain; its full sequence is Trigger factor (427 aa).

Residues 163–248 form the PPIase FKBP-type domain; sequence GDTVVIDFVG…VHEVKSKEVP (86 aa).

This sequence belongs to the FKBP-type PPIase family. Tig subfamily.

It is found in the cytoplasm. The catalysed reaction is [protein]-peptidylproline (omega=180) = [protein]-peptidylproline (omega=0). In terms of biological role, involved in protein export. Acts as a chaperone by maintaining the newly synthesized protein in an open conformation. Functions as a peptidyl-prolyl cis-trans isomerase. In Streptococcus uberis (strain ATCC BAA-854 / 0140J), this protein is Trigger factor.